The chain runs to 566 residues: Osteoclast stimulatory transmembrane protein (566 aa).

At 1 to 51 the chain is on the cytoplasmic side; sequence MPGHPGAAEQLVKTGWRSWHLGFWKALAPLQAAWDAFSQPVPASCGQLLTQ. The helical transmembrane segment at 52–72 threads the bilayer; the sequence is LLLCASLAAAAAGLVYHWLAS. Residues 73–81 are Extracellular-facing; it reads LLLYPPGPS. A helical membrane pass occupies residues 82 to 102; sequence AMVATVCGLLVFLSLGLVPPV. Topologically, residues 103-128 are cytoplasmic; it reads RCLFALSVPTLGMEQGRRLLLSYSTA. The helical transmembrane segment at 129–149 threads the bilayer; that stretch reads TLAIAVVPNVLANVGAAGQVL. The Extracellular segment spans residues 150–227; sequence RCVTEGSLES…ARAAALGTQR (78 aa). A helical membrane pass occupies residues 228-248; that stretch reads VVTGLFMLGLLVESAWYLHCY. The Cytoplasmic portion of the chain corresponds to 249–304; sequence LTDLRFDNIYATQQLTQRLAQAQATHLLAPPPTWLLQAAQLRLSQEELLSCLLRLG. A helical membrane pass occupies residues 305-325; the sequence is LLALLLVATAVAVATDHVAFL. Residues 326–398 are Extracellular-facing; it reads LAQATVDWAQ…CPLLPARRPR (73 aa). A helical membrane pass occupies residues 399 to 419; sequence AAAPLAAGALQLLAGSTVLLE. Residues 420 to 566 are Cytoplasmic-facing; that stretch reads AYARRLRHAI…EGNTGHDRPG (147 aa).

It localises to the membrane. Functionally, probable cell surface receptor that plays a role in cellular fusion and cell differentiation. Cooperates with DCSTAMP in modulating cell-cell fusion in both osteoclasts and foreign body giant cells (FBGCs). Involved in osteoclast bone resorption. Promotes osteoclast differentiation and may play a role in the multinucleated osteoclast maturation. This chain is Osteoclast stimulatory transmembrane protein (OCSTAMP), found in Homo sapiens (Human).